The sequence spans 358 residues: ATP synthase gamma chain, chloroplastic (358 aa).

Residues Met1 to Ala35 constitute a chloroplast transit peptide. Cys123 is a catalytic residue. A disulfide bond links Cys233 and Cys239.

The protein belongs to the ATPase gamma chain family. As to quaternary structure, F-type ATPases have 2 components, F(1) - the catalytic core - and F(0) - the membrane proton channel. F(1) has five subunits: alpha(3), beta(3), gamma(1), delta(1), epsilon(1). F(0) has four main subunits: a(1), b(1), b'(1) and c(10-14). The alpha and beta chains form an alternating ring which encloses part of the gamma chain. F(1) is attached to F(0) by a central stalk formed by the gamma and epsilon chains, while a peripheral stalk is formed by the delta, b and b' chains.

Its subcellular location is the plastid. The protein localises to the chloroplast thylakoid membrane. F(1)F(0) ATP synthase produces ATP from ADP in the presence of a proton or sodium gradient. F-type ATPases consist of two structural domains, F(1) containing the extramembraneous catalytic core and F(0) containing the membrane proton channel, linked together by a central stalk and a peripheral stalk. During catalysis, ATP synthesis in the catalytic domain of F(1) is coupled via a rotary mechanism of the central stalk subunits to proton translocation. Functionally, produces ATP from ADP in the presence of a proton gradient across the membrane. The gamma chain is believed to be important in regulating ATPase activity and the flow of protons through the CF(0) complex. This chain is ATP synthase gamma chain, chloroplastic, found in Chlamydomonas reinhardtii (Chlamydomonas smithii).